A 264-amino-acid polypeptide reads, in one-letter code: Undecaprenyl-diphosphatase (264 aa).

7 helical membrane passes run 42 to 62 (ESLLFTVVLHFATALSTLVVF), 82 to 102 (TQFSLKIIISMLPAVIVGLLF), 109 to 129 (LFGGNILFVGFMLLITALLLW), 146 to 166 (AFIIGVSQAIAMLPGISRSGA), 184 to 204 (FSFLMVVPLIFGKIAKDLMSG), 215 to 235 (ILATGFIAAFLAGLVACTWMI), and 243 to 263 (LSWFAIYCFVVGLAAIIFAYA).

This sequence belongs to the UppP family.

The protein localises to the cell membrane. The catalysed reaction is di-trans,octa-cis-undecaprenyl diphosphate + H2O = di-trans,octa-cis-undecaprenyl phosphate + phosphate + H(+). Functionally, catalyzes the dephosphorylation of undecaprenyl diphosphate (UPP). Confers resistance to bacitracin. The protein is Undecaprenyl-diphosphatase of Christiangramia forsetii (strain DSM 17595 / CGMCC 1.15422 / KT0803) (Gramella forsetii).